Here is a 23-residue protein sequence, read N- to C-terminus: Superoxide dismutase [Mn], mitochondrial (23 aa).

It belongs to the iron/manganese superoxide dismutase family. In terms of assembly, homotetramer. Requires Mn(2+) as cofactor.

The protein localises to the mitochondrion matrix. It carries out the reaction 2 superoxide + 2 H(+) = H2O2 + O2. Destroys superoxide anion radicals which are normally produced within the cells and which are toxic to biological systems. The protein is Superoxide dismutase [Mn], mitochondrial of Aquarana catesbeiana (American bullfrog).